The chain runs to 335 residues: MAEREQSNDSARTDVPAIVSLRTRELDTGEGRMQWASTLERLYCETDVAWPEPRRHFDAEWGGRPFGDLHVSTIRADAHTVVRSPAMIQSDSGEGYLVCLVTDGSVEVRQSGRATVVEPGSFALLDCAAPFVFHSPAPFRQVVVRSPREVLTSRLPGRIVEHGTARSIHGDTGAGGLVGRLFVDIADMDAPMSQGAAVSFASSAVDMLATALTEGLLATSAADLHRTEDLTRVQRVIEQNLHDADITLSDIAAAAGMSLRTVHKLFNAEGTTTRAWLYQARLEAARRYLLTTDLSVADVSECAGFRDVSHFSRLFRSTFGSSPGLYRKEHARIGS.

In terms of domain architecture, HTH araC/xylS-type spans Thr-231–Glu-329. DNA-binding regions (H-T-H motif) lie at residues Ser-249 to Gly-270 and Val-296 to Phe-319.

Transcriptional activator of nphA1 and nphA2 involved in the degradation of 4-nitrophenol (4-NP). The chain is Transcriptional activator NphR (nphR) from Rhodococcus sp.